Here is a 288-residue protein sequence, read N- to C-terminus: Pantothenate synthetase (288 aa).

Residue 30 to 37 (MGALHEGH) participates in ATP binding. The active-site Proton donor is the His-37. Position 61 (Gln-61) interacts with (R)-pantoate. Gln-61 provides a ligand contact to beta-alanine. ATP is bound at residue 147–150 (GEKD). Gln-153 is a binding site for (R)-pantoate. Residues Leu-176 and 184-187 (ISSR) contribute to the ATP site.

The protein belongs to the pantothenate synthetase family. In terms of assembly, homodimer.

It localises to the cytoplasm. The catalysed reaction is (R)-pantoate + beta-alanine + ATP = (R)-pantothenate + AMP + diphosphate + H(+). Its pathway is cofactor biosynthesis; (R)-pantothenate biosynthesis; (R)-pantothenate from (R)-pantoate and beta-alanine: step 1/1. Catalyzes the condensation of pantoate with beta-alanine in an ATP-dependent reaction via a pantoyl-adenylate intermediate. This Prosthecochloris aestuarii (strain DSM 271 / SK 413) protein is Pantothenate synthetase.